The following is a 331-amino-acid chain: Ketol-acid reductoisomerase (NADP(+)) (331 aa).

Residues 2–182 (AQLFYDSDAD…GGTRAGILET (181 aa)) enclose the KARI N-terminal Rossmann domain. NADP(+) is bound by residues 25–28 (YGSQ), Ser51, Ser53, and 83–86 (DEFQ). The active site involves His108. Gly134 is an NADP(+) binding site. One can recognise a KARI C-terminal knotted domain in the interval 183 to 328 (NFKEETETDL…KGLRAMFSWL (146 aa)). The Mg(2+) site is built by Asp191, Glu195, Glu227, and Glu231. Ser252 lines the substrate pocket.

It belongs to the ketol-acid reductoisomerase family. Mg(2+) is required as a cofactor.

The catalysed reaction is (2R)-2,3-dihydroxy-3-methylbutanoate + NADP(+) = (2S)-2-acetolactate + NADPH + H(+). It carries out the reaction (2R,3R)-2,3-dihydroxy-3-methylpentanoate + NADP(+) = (S)-2-ethyl-2-hydroxy-3-oxobutanoate + NADPH + H(+). Its pathway is amino-acid biosynthesis; L-isoleucine biosynthesis; L-isoleucine from 2-oxobutanoate: step 2/4. The protein operates within amino-acid biosynthesis; L-valine biosynthesis; L-valine from pyruvate: step 2/4. Functionally, involved in the biosynthesis of branched-chain amino acids (BCAA). Catalyzes an alkyl-migration followed by a ketol-acid reduction of (S)-2-acetolactate (S2AL) to yield (R)-2,3-dihydroxy-isovalerate. In the isomerase reaction, S2AL is rearranged via a Mg-dependent methyl migration to produce 3-hydroxy-3-methyl-2-ketobutyrate (HMKB). In the reductase reaction, this 2-ketoacid undergoes a metal-dependent reduction by NADPH to yield (R)-2,3-dihydroxy-isovalerate. The protein is Ketol-acid reductoisomerase (NADP(+)) of Prochlorococcus marinus (strain MIT 9211).